The following is a 429-amino-acid chain: 3-phosphoshikimate 1-carboxyvinyltransferase (429 aa).

3-phosphoshikimate is bound by residues Lys-23, Ser-24, and Arg-28. Lys-23 lines the phosphoenolpyruvate pocket. The phosphoenolpyruvate site is built by Gly-95 and Arg-123. Residues Ser-168, Gln-170, Asp-316, and Lys-343 each contribute to the 3-phosphoshikimate site. A phosphoenolpyruvate-binding site is contributed by Gln-170. The Proton acceptor role is filled by Asp-316. Positions 347 and 389 each coordinate phosphoenolpyruvate.

Belongs to the EPSP synthase family. Monomer.

The protein resides in the cytoplasm. It catalyses the reaction 3-phosphoshikimate + phosphoenolpyruvate = 5-O-(1-carboxyvinyl)-3-phosphoshikimate + phosphate. It functions in the pathway metabolic intermediate biosynthesis; chorismate biosynthesis; chorismate from D-erythrose 4-phosphate and phosphoenolpyruvate: step 6/7. Functionally, catalyzes the transfer of the enolpyruvyl moiety of phosphoenolpyruvate (PEP) to the 5-hydroxyl of shikimate-3-phosphate (S3P) to produce enolpyruvyl shikimate-3-phosphate and inorganic phosphate. In Bacillus cereus (strain ATCC 10987 / NRS 248), this protein is 3-phosphoshikimate 1-carboxyvinyltransferase.